A 340-amino-acid chain; its full sequence is Thylakoidal processing peptidase 1, chloroplastic (340 aa).

The N-terminal 52 residues, 1–52, are a transit peptide targeting the chloroplast; it reads MAIRITFTYSTHVARNLVGTRVGPGGYCFESLVRPRFFSHKRDFDRSPRNRP. Residues 155–175 form a helical membrane-spanning segment; the sequence is EDAKAAFTAVTVSILFRSALA. The Lumenal, thylakoid segment spans residues 176 to 340; that stretch reads EPKSIPSTSM…AITRGPVAVS (165 aa). Serine 184 is a catalytic residue.

The protein belongs to the peptidase S26 family.

The protein localises to the plastid. It localises to the chloroplast thylakoid membrane. The enzyme catalyses Cleavage of hydrophobic, N-terminal signal or leader sequences from secreted and periplasmic proteins.. Its function is as follows. Cleaves the thylakoid-transfer domain from a chloroplast protein. This Arabidopsis thaliana (Mouse-ear cress) protein is Thylakoidal processing peptidase 1, chloroplastic (TPP1).